A 352-amino-acid polypeptide reads, in one-letter code: Quinolinate synthase (352 aa).

Iminosuccinate contacts are provided by H48 and S69. Position 114 (C114) interacts with [4Fe-4S] cluster. Residues 140-142 (YAN) and S157 contribute to the iminosuccinate site. C201 provides a ligand contact to [4Fe-4S] cluster. Iminosuccinate-binding positions include 227 to 229 (HPE) and T244. C298 is a [4Fe-4S] cluster binding site.

It belongs to the quinolinate synthase family. Type 1 subfamily. [4Fe-4S] cluster serves as cofactor.

The protein localises to the cytoplasm. It carries out the reaction iminosuccinate + dihydroxyacetone phosphate = quinolinate + phosphate + 2 H2O + H(+). It functions in the pathway cofactor biosynthesis; NAD(+) biosynthesis; quinolinate from iminoaspartate: step 1/1. Functionally, catalyzes the condensation of iminoaspartate with dihydroxyacetone phosphate to form quinolinate. This Pseudomonas entomophila (strain L48) protein is Quinolinate synthase.